Consider the following 170-residue polypeptide: RNA pyrophosphohydrolase (170 aa).

Positions 8–158 (PYRTCVGMML…KRPVYERVVK (151 aa)) constitute a Nudix hydrolase domain. Positions 46–67 (GGVDPGEDTWLAAKRELYEETS) match the Nudix box motif.

This sequence belongs to the Nudix hydrolase family. RppH subfamily. Requires a divalent metal cation as cofactor.

In terms of biological role, accelerates the degradation of transcripts by removing pyrophosphate from the 5'-end of triphosphorylated RNA, leading to a more labile monophosphorylated state that can stimulate subsequent ribonuclease cleavage. The sequence is that of RNA pyrophosphohydrolase from Nitrobacter winogradskyi (strain ATCC 25391 / DSM 10237 / CIP 104748 / NCIMB 11846 / Nb-255).